The sequence spans 179 residues: ATP synthase subunit delta (179 aa).

It belongs to the ATPase delta chain family. In terms of assembly, F-type ATPases have 2 components, F(1) - the catalytic core - and F(0) - the membrane proton channel. F(1) has five subunits: alpha(3), beta(3), gamma(1), delta(1), epsilon(1). F(0) has three main subunits: a(1), b(2) and c(10-14). The alpha and beta chains form an alternating ring which encloses part of the gamma chain. F(1) is attached to F(0) by a central stalk formed by the gamma and epsilon chains, while a peripheral stalk is formed by the delta and b chains.

The protein resides in the cell inner membrane. Functionally, f(1)F(0) ATP synthase produces ATP from ADP in the presence of a proton or sodium gradient. F-type ATPases consist of two structural domains, F(1) containing the extramembraneous catalytic core and F(0) containing the membrane proton channel, linked together by a central stalk and a peripheral stalk. During catalysis, ATP synthesis in the catalytic domain of F(1) is coupled via a rotary mechanism of the central stalk subunits to proton translocation. In terms of biological role, this protein is part of the stalk that links CF(0) to CF(1). It either transmits conformational changes from CF(0) to CF(1) or is implicated in proton conduction. In Burkholderia orbicola (strain MC0-3), this protein is ATP synthase subunit delta.